Consider the following 232-residue polypeptide: Ribonuclease 3 (232 aa).

Residues 6 to 133 form the RNase III domain; it reads LKEIEENLGV…IIAAVYLDKG (128 aa). Position 46 (E46) interacts with Mg(2+). D50 is a catalytic residue. 2 residues coordinate Mg(2+): D119 and E122. The active site involves E122. A DRBM domain is found at 160-229; that stretch reads DFKTKLQELL…AKQALDILEG (70 aa).

This sequence belongs to the ribonuclease III family. In terms of assembly, homodimer. Requires Mg(2+) as cofactor.

The protein localises to the cytoplasm. The catalysed reaction is Endonucleolytic cleavage to 5'-phosphomonoester.. Digests double-stranded RNA. Involved in the processing of primary rRNA transcript to yield the immediate precursors to the large and small rRNAs (23S and 16S). Processes some mRNAs, and tRNAs when they are encoded in the rRNA operon. Processes pre-crRNA and tracrRNA of type II CRISPR loci if present in the organism. The sequence is that of Ribonuclease 3 from Clostridium beijerinckii (strain ATCC 51743 / NCIMB 8052) (Clostridium acetobutylicum).